The following is a 482-amino-acid chain: Aspartyl/glutamyl-tRNA(Asn/Gln) amidotransferase subunit B (482 aa).

Belongs to the GatB/GatE family. GatB subfamily. In terms of assembly, heterotrimer of A, B and C subunits.

It catalyses the reaction L-glutamyl-tRNA(Gln) + L-glutamine + ATP + H2O = L-glutaminyl-tRNA(Gln) + L-glutamate + ADP + phosphate + H(+). The enzyme catalyses L-aspartyl-tRNA(Asn) + L-glutamine + ATP + H2O = L-asparaginyl-tRNA(Asn) + L-glutamate + ADP + phosphate + 2 H(+). Its function is as follows. Allows the formation of correctly charged Asn-tRNA(Asn) or Gln-tRNA(Gln) through the transamidation of misacylated Asp-tRNA(Asn) or Glu-tRNA(Gln) in organisms which lack either or both of asparaginyl-tRNA or glutaminyl-tRNA synthetases. The reaction takes place in the presence of glutamine and ATP through an activated phospho-Asp-tRNA(Asn) or phospho-Glu-tRNA(Gln). The polypeptide is Aspartyl/glutamyl-tRNA(Asn/Gln) amidotransferase subunit B (Thermotoga neapolitana (strain ATCC 49049 / DSM 4359 / NBRC 107923 / NS-E)).